A 404-amino-acid chain; its full sequence is L-cysteine:1D-myo-inositol 2-amino-2-deoxy-alpha-D-glucopyranoside ligase (404 aa).

Zn(2+) is bound at residue C32. L-cysteinyl-5'-AMP-binding positions include 32 to 35 (CGIT), T47, and 70 to 72 (NIT). The 'HIGH' region motif lies at 34–44 (ITPYDSTHLGH). Positions 176 to 181 (ERGGDP) match the 'ERGGDP' region motif. W216 provides a ligand contact to L-cysteinyl-5'-AMP. C220 lines the Zn(2+) pocket. 238 to 240 (GSD) is an L-cysteinyl-5'-AMP binding site. H245 contributes to the Zn(2+) binding site. I272 lines the L-cysteinyl-5'-AMP pocket. A 'KMSKS' region motif is present at residues 278–282 (KMSKS).

Belongs to the class-I aminoacyl-tRNA synthetase family. MshC subfamily. In terms of assembly, monomer. It depends on Zn(2+) as a cofactor.

It carries out the reaction 1D-myo-inositol 2-amino-2-deoxy-alpha-D-glucopyranoside + L-cysteine + ATP = 1D-myo-inositol 2-(L-cysteinylamino)-2-deoxy-alpha-D-glucopyranoside + AMP + diphosphate + H(+). Functionally, catalyzes the ATP-dependent condensation of GlcN-Ins and L-cysteine to form L-Cys-GlcN-Ins. This chain is L-cysteine:1D-myo-inositol 2-amino-2-deoxy-alpha-D-glucopyranoside ligase (mshC), found in Corynebacterium glutamicum (strain ATCC 13032 / DSM 20300 / JCM 1318 / BCRC 11384 / CCUG 27702 / LMG 3730 / NBRC 12168 / NCIMB 10025 / NRRL B-2784 / 534).